Here is a 134-residue protein sequence, read N- to C-terminus: Large ribosomal subunit protein eL32 (134 aa).

Belongs to the eukaryotic ribosomal protein eL32 family.

This is Large ribosomal subunit protein eL32 (rpl32e) from Picrophilus torridus (strain ATCC 700027 / DSM 9790 / JCM 10055 / NBRC 100828 / KAW 2/3).